Here is a 261-residue protein sequence, read N- to C-terminus: uncharacterized protein (261 aa).

The N-terminal stretch at 1 to 22 (MKYYGKCISYISILILTFFIGG) is a signal peptide. Cysteine 23 carries N-palmitoyl cysteine lipidation. The S-diacylglycerol cysteine moiety is linked to residue cysteine 23.

Belongs to the staphylococcal tandem lipoprotein family.

The protein localises to the cell membrane. This is an uncharacterized protein from Staphylococcus epidermidis (strain ATCC 12228 / FDA PCI 1200).